The chain runs to 318 residues: Magnetosome protein MamM (318 aa).

The tract at residues 1–210 (MRKSGCAVCS…FMDAYRGLMD (210 aa)) is transmembrane domain (TMD). Transmembrane regions (helical) follow at residues 13 to 33 (IGWVGLAVSTVLMVMKAFVGL), 39 to 59 (AMLADAMYSLKDMLNALMVII), 81 to 101 (FILSMVVSVVFIVLTGYLLVH), and 117 to 137 (LIVLWAALVSIGVNVGMYFYS). Residues 211–318 (HTAGEAVQNR…DEVMLSKVDN (108 aa)) form a C-terminal domain (CTD) region. Residues D249, H264, H285, and E289 each coordinate Fe cation.

It belongs to the cation diffusion facilitator (CDF) transporter (TC 2.A.4) family. In terms of assembly, forms homodimers via its C-terminal domain (CTD) in the presence of metal cations. Interacts with MamB via their CTD. Isolated CTD forms homodimers.

The protein resides in the magnetosome membrane. It localises to the cell inner membrane. Functionally, essential for magnetosome formation; required for stable accumulation of MamB. May nucleate iron crystal formation. Probably binds and transports iron. Binds divalent cations, possibly up to 3 Zn(2+) per dimer in vitro, probably iron in vivo. One of 7 genes (mamLQBIEMO) able to induce magnetosome membrane biogenesis; coexpression of mamLQRBIEMO in a deletion of the 17 gene mamAB operon restores magnetosome vesicle formation but not magnetite biosynthesis. The polypeptide is Magnetosome protein MamM (Magnetospirillum gryphiswaldense (strain DSM 6361 / JCM 21280 / NBRC 15271 / MSR-1)).